The following is a 350-amino-acid chain: Succinylglutamate desuccinylase (350 aa).

3 residues coordinate Zn(2+): H71, E74, and H169. Residue E233 is part of the active site.

The protein belongs to the AspA/AstE family. Succinylglutamate desuccinylase subfamily. It depends on Zn(2+) as a cofactor.

It carries out the reaction N-succinyl-L-glutamate + H2O = L-glutamate + succinate. Its pathway is amino-acid degradation; L-arginine degradation via AST pathway; L-glutamate and succinate from L-arginine: step 5/5. Functionally, transforms N(2)-succinylglutamate into succinate and glutamate. The chain is Succinylglutamate desuccinylase from Pseudoalteromonas atlantica (strain T6c / ATCC BAA-1087).